Reading from the N-terminus, the 419-residue chain is S-adenosylmethionine synthase (419 aa).

His15 contacts ATP. A Mg(2+)-binding site is contributed by Asp17. Glu43 is a binding site for K(+). Residues Glu56 and Gln100 each coordinate L-methionine. Residues 100-110 (QSPDIAQGVNE) are flexible loop. ATP contacts are provided by residues 171 to 173 (DGK), 248 to 249 (KF), Asp257, 263 to 264 (RK), Ala280, and Lys284. L-methionine is bound at residue Asp257. Lys288 serves as a coordination point for L-methionine.

This sequence belongs to the AdoMet synthase family. Homotetramer; dimer of dimers. The cofactor is Mg(2+). K(+) serves as cofactor.

Its subcellular location is the cytoplasm. It catalyses the reaction L-methionine + ATP + H2O = S-adenosyl-L-methionine + phosphate + diphosphate. Its pathway is amino-acid biosynthesis; S-adenosyl-L-methionine biosynthesis; S-adenosyl-L-methionine from L-methionine: step 1/1. Its function is as follows. Catalyzes the formation of S-adenosylmethionine (AdoMet) from methionine and ATP. The overall synthetic reaction is composed of two sequential steps, AdoMet formation and the subsequent tripolyphosphate hydrolysis which occurs prior to release of AdoMet from the enzyme. This chain is S-adenosylmethionine synthase, found in Prochlorococcus marinus (strain MIT 9313).